The chain runs to 125 residues: Succinate dehydrogenase assembly factor 3, mitochondrial (125 aa).

The N-terminal 30 residues, 1–30, are a transit peptide targeting the mitochondrion; the sequence is MPGRHVSRVRALYKRVLQLHRVLPPDLKSL.

The protein belongs to the complex I LYR family. SDHAF3 subfamily. As to quaternary structure, interacts with SDHB within an SDHA-SDHB subcomplex.

It is found in the mitochondrion matrix. Functionally, plays an essential role in the assembly of succinate dehydrogenase (SDH), an enzyme complex (also referred to as respiratory complex II) that is a component of both the tricarboxylic acid (TCA) cycle and the mitochondrial electron transport chain, and which couples the oxidation of succinate to fumarate with the reduction of ubiquinone (coenzyme Q) to ubiquinol. Promotes maturation of the iron-sulfur protein subunit SDHB of the SDH catalytic dimer, protecting it from the deleterious effects of oxidants. May act together with SDHAF1. The sequence is that of Succinate dehydrogenase assembly factor 3, mitochondrial from Homo sapiens (Human).